The chain runs to 415 residues: Homoserine O-acetyltransferase (415 aa).

The 323-residue stretch at N47–P369 folds into the AB hydrolase-1 domain. The active-site Nucleophile is the S155. R226 contacts substrate. Active-site residues include D329 and H362. D363 is a binding site for substrate. The disordered stretch occupies residues G383 to R415.

The protein belongs to the AB hydrolase superfamily. MetX family. In terms of assembly, homodimer.

The protein resides in the cytoplasm. It catalyses the reaction L-homoserine + acetyl-CoA = O-acetyl-L-homoserine + CoA. It functions in the pathway amino-acid biosynthesis; L-methionine biosynthesis via de novo pathway; O-acetyl-L-homoserine from L-homoserine: step 1/1. Transfers an acetyl group from acetyl-CoA to L-homoserine, forming acetyl-L-homoserine. This chain is Homoserine O-acetyltransferase, found in Haloferax volcanii (strain ATCC 29605 / DSM 3757 / JCM 8879 / NBRC 14742 / NCIMB 2012 / VKM B-1768 / DS2) (Halobacterium volcanii).